The following is a 547-amino-acid chain: Chaperonin GroEL 1 (547 aa).

ATP contacts are provided by residues 30–33, Lys-51, 87–91, Gly-415, 479–481, and Asp-495; these read TLGP, DGTTT, and NAA.

Belongs to the chaperonin (HSP60) family. In terms of assembly, forms a cylinder of 14 subunits composed of two heptameric rings stacked back-to-back. Interacts with the co-chaperonin GroES.

The protein resides in the cytoplasm. It carries out the reaction ATP + H2O + a folded polypeptide = ADP + phosphate + an unfolded polypeptide.. Its function is as follows. Together with its co-chaperonin GroES, plays an essential role in assisting protein folding. The GroEL-GroES system forms a nano-cage that allows encapsulation of the non-native substrate proteins and provides a physical environment optimized to promote and accelerate protein folding. The polypeptide is Chaperonin GroEL 1 (Vibrio parahaemolyticus serotype O3:K6 (strain RIMD 2210633)).